The primary structure comprises 67 residues: uncharacterized protein (67 aa).

This is an uncharacterized protein from Escherichia coli (Bacteriophage T4).